A 252-amino-acid polypeptide reads, in one-letter code: Acyl-coenzyme A diphosphatase FITM2 (252 aa).

At 1–25 (MAAAVAGSLVDKLVCLWRQPYTRIY) the chain is on the cytoplasmic side. The helical transmembrane segment at 26–46 (LPHLFFCISLVGSVLKNAELV) threads the bilayer. The Lumenal portion of the chain corresponds to 47 to 59 (PESYFSSSRNVLN). A helical transmembrane segment spans residues 60 to 80 (LYFVKVSWGWTIVLLLPFIAY). At 81–94 (SNFYIKSHMFALRR) the chain is on the cytoplasmic side. Residues 95-115 (LTSLLVATLVWYICTETFFYI) form a helical membrane-spanning segment. The Lumenal segment spans residues 116 to 156 (EDITGSCYESNTMVVIRGEFDTKAACRKAGFFWDGFDISGH). Residue H156 is part of the active site. The chain crosses the membrane as a helical span at residues 157-177 (SFILSYSSLVIMEEMVPMLHI). The Cytoplasmic portion of the chain corresponds to 178–190 (QPAYRNPPLDCLY). The helical transmembrane segment at 191–211 (LALNVIVAIWIWMFGCTSVYF) threads the bilayer. Residue H212 is part of the active site. Topologically, residues 212–223 (HDIIDKILGTSC) are lumenal. Residues 224 to 244 (GILGWYMTYKVWYVKLFSPGL) form a helical membrane-spanning segment. At 245–252 (PPQPKQHT) the chain is on the cytoplasmic side.

This sequence belongs to the FIT family. FIT2 subfamily. Widely expressed.

Its subcellular location is the endoplasmic reticulum membrane. It catalyses the reaction an acyl-CoA + H2O = an acyl-4'-phosphopantetheine + adenosine 3',5'-bisphosphate + 2 H(+). In terms of biological role, fatty acyl-coenzyme A (CoA) diphosphatase that hydrolyzes fatty acyl-CoA to yield acyl-4'-phosphopantetheine and adenosine 3',5'-bisphosphate. Preferentially hydrolyzes unsaturated long-chain acyl-CoA substrates in the endoplasmic reticulum (ER) lumen. This catalytic activity is required for maintaining ER structure and for lipid droplets (LDs) biogenesis, which are lipid storage organelles involved in maintaining lipid and energy homeostasis. Required for lipid droplet accumulation in liver and intestine during embryogenesis. May directly bind to diacylglycerol (DAGs) and triacylglycerol, which is also important for LD biogenesis. May support directional budding of nacent LDs from the ER into the cytosol by reducing DAG levels at sites of LD formation. May play a role in the regulation of cell morphology, ER morphology and cytoskeletal organization. This Danio rerio (Zebrafish) protein is Acyl-coenzyme A diphosphatase FITM2.